The sequence spans 225 residues: RNA chaperone ProQ (225 aa).

The tract at residues 103-173 is disordered; that stretch reads LEEAKARVQT…APREERHTPV (71 aa). Over residues 109–118 the composition is skewed to low complexity; it reads RVQTQRAAQQ. The segment covering 137–146 has biased composition (basic residues); the sequence is RERKPRPQQP. The span at 147–156 shows a compositional bias: basic and acidic residues; that stretch reads RRKEGAEQRK.

It belongs to the ProQ family.

The protein localises to the cytoplasm. RNA chaperone with significant RNA binding, RNA strand exchange and RNA duplexing activities. May regulate ProP activity through an RNA-based, post-transcriptional mechanism. In Klebsiella pneumoniae (strain 342), this protein is RNA chaperone ProQ.